Here is a 327-residue protein sequence, read N- to C-terminus: uncharacterized protein (327 aa).

Residues 12-32 (LVVVVVAIAIFTLVLLMLWEG) form a helical membrane-spanning segment. The disordered stretch occupies residues 149-170 (AFSAVETSEGSDQESEGADEQG). Acidic residues predominate over residues 157 to 167 (EGSDQESEGAD). A coiled-coil region spans residues 162-227 (ESEGADEQGK…LDEENREVAE (66 aa)).

It is found in the membrane. This is an uncharacterized protein from Encephalitozoon cuniculi (strain GB-M1) (Microsporidian parasite).